Consider the following 173-residue polypeptide: Atrial gland and califin peptides (173 aa).

An N-terminal signal peptide occupies residues 1-21; sequence MKANTMFIILCLSLSTLCVSS. Residues 22 to 34 constitute a propeptide that is removed on maturation; that stretch reads QSTSVHGKIFVPN. Isoleucine amide is present on I69. Residues 73–114 constitute a propeptide that is removed on maturation; the sequence is AAGEMEQSEGQNPETKSHSWRKRSVLTPSLSSLGESLESGIS. The interval 75 to 94 is disordered; it reads GEMEQSEGQNPETKSHSWRK. Residues C141 and C172 are joined by a disulfide bond. L152 carries the post-translational modification Leucine amide.

Belongs to the molluscan ELH family. In terms of assembly, califin A consists of a 36-residue large subunit bound by a single disulfide bond to a 18-residue small subunit.

The protein resides in the secreted. Its function is as follows. The atrial gland peptide A and peptide B precursors are the source of the 2 peptides that, upon release from this reproductive system gland, initiate the egg-laying process by exciting the bag cell neurons. These neurons, clustered in neural connectives near the abdominal ganglion, in turn release other peptides that act directly on the ganglion and also, via the circulating hemolymph, on many other organs to control the physiological processes of egg-laying. One of these other peptides is the egg-laying hormone. Injected in sexually mature animals califin A excites LB and LC cells of the abdominal ganglion and causes egg-laying. The sequence is that of Atrial gland and califin peptides from Aplysia californica (California sea hare).